Reading from the N-terminus, the 294-residue chain is Ribosomal RNA small subunit methyltransferase H (294 aa).

Residues 31–33 (GGY), Asp-49, Phe-76, Asp-97, and Gln-104 each bind S-adenosyl-L-methionine.

It belongs to the methyltransferase superfamily. RsmH family.

It is found in the cytoplasm. The catalysed reaction is cytidine(1402) in 16S rRNA + S-adenosyl-L-methionine = N(4)-methylcytidine(1402) in 16S rRNA + S-adenosyl-L-homocysteine + H(+). In terms of biological role, specifically methylates the N4 position of cytidine in position 1402 (C1402) of 16S rRNA. The protein is Ribosomal RNA small subunit methyltransferase H of Wolbachia pipientis subsp. Culex pipiens (strain wPip).